The primary structure comprises 1061 residues: Error-prone DNA polymerase (1061 aa).

Belongs to the DNA polymerase type-C family. DnaE2 subfamily.

It is found in the cytoplasm. It carries out the reaction DNA(n) + a 2'-deoxyribonucleoside 5'-triphosphate = DNA(n+1) + diphosphate. In terms of biological role, DNA polymerase involved in damage-induced mutagenesis and translesion synthesis (TLS). It is not the major replicative DNA polymerase. In Bdellovibrio bacteriovorus (strain ATCC 15356 / DSM 50701 / NCIMB 9529 / HD100), this protein is Error-prone DNA polymerase.